Reading from the N-terminus, the 152-residue chain is Histone deacetylase complex subunit SAP18 (152 aa).

Residues 1–38 (MAEAARRQGGGRPLPPPPRGVNQQPPRPKPEPVDREKT) form a disordered region. Residues 28 to 38 (PKPEPVDREKT) are compositionally biased toward basic and acidic residues.

It belongs to the SAP18 family. In terms of assembly, interacts with SIN3, ERF3, ERF4 and HDA19. Ubiquitous, with low level in flowers.

Functionally, links the histone deacetylase complex to transcriptional repressors bound to chromatin. Involved in the tethering of the SIN3 complex to core histone proteins. This is Histone deacetylase complex subunit SAP18 from Arabidopsis thaliana (Mouse-ear cress).